A 325-amino-acid polypeptide reads, in one-letter code: tRNA(Ile)-lysidine synthase (325 aa).

ATP is bound at residue 34–39 (SGGADS).

This sequence belongs to the tRNA(Ile)-lysidine synthase family.

It localises to the cytoplasm. The enzyme catalyses cytidine(34) in tRNA(Ile2) + L-lysine + ATP = lysidine(34) in tRNA(Ile2) + AMP + diphosphate + H(+). In terms of biological role, ligates lysine onto the cytidine present at position 34 of the AUA codon-specific tRNA(Ile) that contains the anticodon CAU, in an ATP-dependent manner. Cytidine is converted to lysidine, thus changing the amino acid specificity of the tRNA from methionine to isoleucine. This chain is tRNA(Ile)-lysidine synthase, found in Rhodococcus erythropolis (strain PR4 / NBRC 100887).